The sequence spans 897 residues: F-BAR domain only protein 1 (897 aa).

Residues 1–276 (MIHFFHTLQG…VGFEEYLSSL (276 aa)) are mediates membrane-binding. The F-BAR domain occupies 2-248 (IHFFHTLQGE…NVENIGIENL (247 aa)). A coiled-coil region spans residues 134–154 (LQKTREGYHSKCVELERLRKE). The segment at 475–537 (VEDSGLDSPS…PNPAPSSQSN (63 aa)) is disordered. Over residues 501-520 (PSSQSQSKDSINAASQSRGG) the composition is skewed to polar residues. Residues 630–894 (SWPVAAAITE…RFATGKYMAG (265 aa)) enclose the MHD domain.

The protein belongs to the FCHO family. As to quaternary structure, may oligomerize and form homotetramer. Interacts with acvr1l/alk8; linking this receptor to clathrin-mediated endocytosis.

The protein resides in the membrane. It localises to the clathrin-coated pit. In terms of biological role, may function in an early step of clathrin-mediated endocytosis. May regulate Bmp signaling by regulating clathrin-mediated endocytosis of Bmp receptors. The protein is F-BAR domain only protein 1 (fcho1) of Danio rerio (Zebrafish).